A 668-amino-acid polypeptide reads, in one-letter code: Eukaryotic translation initiation factor 3 subunit L (668 aa).

Positions 1–17 (MVADASQQGQSNGAAFN) are enriched in polar residues. The segment at 1–42 (MVADASQQGQSNGAAFNQQQQYQQQQQRQLFGGEEEFGDEEE) is disordered. Over residues 18–32 (QQQQYQQQQQRQLFG) the composition is skewed to low complexity. A compositionally biased stretch (acidic residues) spans 33–42 (GEEEFGDEEE). Residues 358 to 552 (SFTHILVFIM…QVVNTSDLDF (195 aa)) form the PCI domain. Positions 625–668 (AGVKAGPPAFSQRSGGAGRSSVNKSAPAPAGAWGSSKPQPSVTA) are disordered. Residues 648–662 (KSAPAPAGAWGSSKP) are compositionally biased toward low complexity.

It belongs to the eIF-3 subunit L family. As to quaternary structure, component of the eukaryotic translation initiation factor 3 (eIF-3) complex.

It is found in the cytoplasm. Component of the eukaryotic translation initiation factor 3 (eIF-3) complex, which is involved in protein synthesis of a specialized repertoire of mRNAs and, together with other initiation factors, stimulates binding of mRNA and methionyl-tRNAi to the 40S ribosome. The eIF-3 complex specifically targets and initiates translation of a subset of mRNAs involved in cell proliferation. This is Eukaryotic translation initiation factor 3 subunit L from Mycosarcoma maydis (Corn smut fungus).